The following is a 255-amino-acid chain: NAD kinase (255 aa).

Residue Asp-44 is the Proton acceptor of the active site. NAD(+)-binding positions include Asp-44–Gly-45, His-49, Asn-114–Glu-115, Asp-144, Ala-152, Ser-155–Ser-160, and Gln-216.

It belongs to the NAD kinase family. It depends on a divalent metal cation as a cofactor.

Its subcellular location is the cytoplasm. The enzyme catalyses NAD(+) + ATP = ADP + NADP(+) + H(+). In terms of biological role, involved in the regulation of the intracellular balance of NAD and NADP, and is a key enzyme in the biosynthesis of NADP. Catalyzes specifically the phosphorylation on 2'-hydroxyl of the adenosine moiety of NAD to yield NADP. The protein is NAD kinase of Rickettsia typhi (strain ATCC VR-144 / Wilmington).